A 125-amino-acid polypeptide reads, in one-letter code: U-scoloptoxin(05)-Sm1a (125 aa).

The N-terminal stretch at 1–20 (MNVLYTKIFFILILTRTSSA) is a signal peptide.

It belongs to the scoloptoxin-05 family. Post-translationally, contains 4 disulfide bonds. As to expression, expressed by the venom gland.

The protein localises to the secreted. The protein is U-scoloptoxin(05)-Sm1a of Scolopendra morsitans (Tanzanian blue ringleg centipede).